The primary structure comprises 214 residues: Phosphatidylcholine transfer protein (214 aa).

At methionine 1 the chain carries N-acetylmethionine. An START domain is found at 1-212 (MELAAGSFSE…MARACQNYLK (212 aa)). A 1,2-diacyl-sn-glycero-3-phosphocholine contacts are provided by tyrosine 72 and arginine 78. A Phosphoserine modification is found at serine 139. Residue glutamine 157 coordinates a 1,2-diacyl-sn-glycero-3-phosphocholine.

Interacts with ACOT13/THEM2. Highest expression in liver, placenta, testis, kidney and heart. Low levels in brain and lung. No expression detected in thymus.

It is found in the cytoplasm. Catalyzes the transfer of phosphatidylcholine between membranes. Binds a single lipid molecule. The sequence is that of Phosphatidylcholine transfer protein (PCTP) from Homo sapiens (Human).